Here is a 207-residue protein sequence, read N- to C-terminus: MPKVQVVNMQGSPVGELELDEYVFGIEPNTHVMHQAVVGQLASQRRGTHSTLLRGEVRGGGRKPWRQKGTGRARAGSIRSPLWRGGAVLFGPKPRKYGFSLPKKVRRLALRSALSSKVNEQKLIVLEDLSLNEAKTREMVKVLQALNVGKKALIVTDEFMETIDRSARNIAGIKTTAVEGMNIYDLLNSDVIVMTKAAVTKTEEVLA.

The segment at Glu-56–Gly-76 is disordered. Over residues Gly-60–Gly-71 the composition is skewed to basic residues.

It belongs to the universal ribosomal protein uL4 family. Part of the 50S ribosomal subunit.

Its function is as follows. One of the primary rRNA binding proteins, this protein initially binds near the 5'-end of the 23S rRNA. It is important during the early stages of 50S assembly. It makes multiple contacts with different domains of the 23S rRNA in the assembled 50S subunit and ribosome. Forms part of the polypeptide exit tunnel. In Desulfitobacterium hafniense (strain DSM 10664 / DCB-2), this protein is Large ribosomal subunit protein uL4.